Here is a 1023-residue protein sequence, read N- to C-terminus: Probable histidine kinase 3 (1023 aa).

Residues 1 to 80 (MDEMSCGGGG…RGWRVVRETW (80 aa)) lie on the Cytoplasmic side of the membrane. Residues 81-101 (WWVLLLWILAGSLGSFYLFLF) form a helical membrane-spanning segment. At 102–387 (MNAQSLDKRR…CRFEKKPPWP (286 aa)) the chain is on the extracellular side. In terms of domain architecture, CHASE spans 151–352 (TPSAIDQMTF…TNESPISMYG (202 aa)). A helical transmembrane segment spans residues 388 to 408 (WLAITSSFGTLVIALLTGHIF). Over 409-1023 (QATVHRIAKV…RFFQNHDQVE (615 aa)) the chain is Cytoplasmic. Residues 445-715 (TVSHEIRTPM…TFTFTAVLMR (271 aa)) enclose the Histidine kinase domain. The residue at position 448 (His-448) is a Phosphohistidine; by autocatalysis. Response regulatory domains are found at residues 732-854 (NALV…RRAL) and 880-1016 (QIIV…ARFF). Position 783 is a 4-aspartylphosphate (Asp-783). Positions 812 to 831 (LFLLGSSASSPKGGSDTSRE) are disordered. The span at 817 to 827 (SSASSPKGGSD) shows a compositional bias: polar residues. Asp-930 carries the 4-aspartylphosphate modification.

Post-translationally, activation probably requires a transfer of a phosphate group between a His in the transmitter domain and an Asp of the receiver domain.

It localises to the cell membrane. It carries out the reaction ATP + protein L-histidine = ADP + protein N-phospho-L-histidine.. Its function is as follows. Cytokinin receptor related to bacterial two-component regulators. Functions as a histidine kinase and transmits the stress signal to a downstream MAPK cascade. This is Probable histidine kinase 3 from Oryza sativa subsp. indica (Rice).